Reading from the N-terminus, the 178-residue chain is ATP synthase subunit delta (178 aa).

Belongs to the ATPase delta chain family. As to quaternary structure, F-type ATPases have 2 components, F(1) - the catalytic core - and F(0) - the membrane proton channel. F(1) has five subunits: alpha(3), beta(3), gamma(1), delta(1), epsilon(1). F(0) has three main subunits: a(1), b(2) and c(10-14). The alpha and beta chains form an alternating ring which encloses part of the gamma chain. F(1) is attached to F(0) by a central stalk formed by the gamma and epsilon chains, while a peripheral stalk is formed by the delta and b chains.

It localises to the cell membrane. F(1)F(0) ATP synthase produces ATP from ADP in the presence of a proton or sodium gradient. F-type ATPases consist of two structural domains, F(1) containing the extramembraneous catalytic core and F(0) containing the membrane proton channel, linked together by a central stalk and a peripheral stalk. During catalysis, ATP synthesis in the catalytic domain of F(1) is coupled via a rotary mechanism of the central stalk subunits to proton translocation. Its function is as follows. This protein is part of the stalk that links CF(0) to CF(1). It either transmits conformational changes from CF(0) to CF(1) or is implicated in proton conduction. This is ATP synthase subunit delta from Streptococcus equinus (Streptococcus bovis).